The following is a 636-amino-acid chain: 1-deoxy-D-xylulose-5-phosphate synthase (636 aa).

Thiamine diphosphate-binding positions include histidine 72 and 113–115 (GHA). Aspartate 144 contributes to the Mg(2+) binding site. Residues 145–146 (GA), asparagine 174, tyrosine 287, and glutamate 370 contribute to the thiamine diphosphate site. Residue asparagine 174 coordinates Mg(2+).

It belongs to the transketolase family. DXPS subfamily. In terms of assembly, homodimer. Requires Mg(2+) as cofactor. Thiamine diphosphate serves as cofactor.

It carries out the reaction D-glyceraldehyde 3-phosphate + pyruvate + H(+) = 1-deoxy-D-xylulose 5-phosphate + CO2. Its pathway is metabolic intermediate biosynthesis; 1-deoxy-D-xylulose 5-phosphate biosynthesis; 1-deoxy-D-xylulose 5-phosphate from D-glyceraldehyde 3-phosphate and pyruvate: step 1/1. Catalyzes the acyloin condensation reaction between C atoms 2 and 3 of pyruvate and glyceraldehyde 3-phosphate to yield 1-deoxy-D-xylulose-5-phosphate (DXP). This is 1-deoxy-D-xylulose-5-phosphate synthase from Crocosphaera subtropica (strain ATCC 51142 / BH68) (Cyanothece sp. (strain ATCC 51142)).